Here is a 164-residue protein sequence, read N- to C-terminus: UPF0251 protein MA_0157 (164 aa).

The interval 91-124 (GDYRMPRGDGTGPAGQGPVGGGRSRGQGKGRGGR) is disordered. A compositionally biased stretch (gly residues) spans 99–115 (DGTGPAGQGPVGGGRSR).

The protein belongs to the UPF0251 family.

The polypeptide is UPF0251 protein MA_0157 (Methanosarcina acetivorans (strain ATCC 35395 / DSM 2834 / JCM 12185 / C2A)).